The following is a 572-amino-acid chain: Galectin-3-binding protein B (572 aa).

The N-terminal stretch at Met-1–Ala-14 is a signal peptide. Residues Val-32–Ala-131 enclose the SRCR domain. Disulfide bonds link Cys-56–Cys-120, Cys-69–Cys-130, and Cys-100–Cys-110. Asn-135, Asn-195, and Asn-202 each carry an N-linked (GlcNAc...) asparagine glycan. The 68-residue stretch at Cys-164–Thr-231 folds into the BTB domain. The BACK domain maps to Gln-270 to Gln-372. Residues Asn-430 and Asn-548 are each glycosylated (N-linked (GlcNAc...) asparagine).

The protein resides in the secreted. It localises to the extracellular space. The protein localises to the extracellular matrix. In terms of biological role, promotes integrin-mediated cell adhesion. The sequence is that of Galectin-3-binding protein B (lgals3bpb) from Danio rerio (Zebrafish).